The sequence spans 213 residues: MSDKNEVSSLYPPPPPFIQFFTEENSKLFRECGKDEEKLAKCTTKQREQLKYFVKPELPRDGSYRAFGNVWKIKDELPELSQMGIEQLYRKRESVTELENGTTTEVEPSPQDSQSGTNYENKIQESKKLMKSLLLNFLELIGILGVDSSRYEKKLDEIRVIAINIHHLLNEYRPHQSRESLIMLFEEQLEHKRKEMEHINKVCDEVESKLAQL.

Positions 96 to 120 (TELENGTTTEVEPSPQDSQSGTNYE) are disordered. The segment covering 97–120 (ELENGTTTEVEPSPQDSQSGTNYE) has biased composition (polar residues).

The protein belongs to the Mediator complex subunit 7 family. As to quaternary structure, component of the Mediator complex.

Its subcellular location is the nucleus. Its function is as follows. Component of the Mediator complex, a coactivator involved in the regulated transcription of nearly all RNA polymerase II-dependent genes. Mediator functions as a bridge to convey information from gene-specific regulatory proteins to the basal RNA polymerase II transcription machinery. Mediator is recruited to promoters by direct interactions with regulatory proteins and serves as a scaffold for the assembly of a functional preinitiation complex with RNA polymerase II and the general transcription factors. This Kluyveromyces lactis (strain ATCC 8585 / CBS 2359 / DSM 70799 / NBRC 1267 / NRRL Y-1140 / WM37) (Yeast) protein is Mediator of RNA polymerase II transcription subunit 7 (MED7).